A 341-amino-acid chain; its full sequence is Ribosomal RNA small subunit methyltransferase C (341 aa).

This sequence belongs to the methyltransferase superfamily. RsmC family. In terms of assembly, monomer.

It is found in the cytoplasm. It catalyses the reaction guanosine(1207) in 16S rRNA + S-adenosyl-L-methionine = N(2)-methylguanosine(1207) in 16S rRNA + S-adenosyl-L-homocysteine + H(+). In terms of biological role, specifically methylates the guanine in position 1207 of 16S rRNA in the 30S particle. This chain is Ribosomal RNA small subunit methyltransferase C, found in Vibrio parahaemolyticus serotype O3:K6 (strain RIMD 2210633).